The sequence spans 188 residues: Large ribosomal subunit protein bL35m (188 aa).

Belongs to the bacterial ribosomal protein bL35 family. In terms of assembly, component of the mitochondrial large ribosomal subunit (mt-LSU). Mature mammalian 55S mitochondrial ribosomes consist of a small (28S) and a large (39S) subunit. The 28S small subunit contains a 12S ribosomal RNA (12S mt-rRNA) and 30 different proteins. The 39S large subunit contains a 16S rRNA (16S mt-rRNA), a copy of mitochondrial valine transfer RNA (mt-tRNA(Val)), which plays an integral structural role, and 52 different proteins.

It is found in the mitochondrion. The sequence is that of Large ribosomal subunit protein bL35m (MRPL35) from Homo sapiens (Human).